Consider the following 830-residue polypeptide: ABC transporter G family member STR (830 aa).

At 1–551 (MAKFKRTDTN…RTTLNVIRTP (551 aa)) the chain is on the cytoplasmic side. Positions 46-297 (LEFNNLSYSV…LAGFARPVPD (252 aa)) constitute an ABC transporter domain. 90 to 97 (GPSGAGKS) is a binding site for ATP. 3 disordered regions span residues 333 to 356 (DQAA…PYAK), 368 to 422 (SHFS…SMQS), and 471 to 491 (SMSS…NKTP). The span at 368–378 (SHFSTGNMNSQ) shows a compositional bias: polar residues. Acidic residues predominate over residues 395–405 (DYEDDDDEDEF). A compositionally biased stretch (low complexity) spans 471-483 (SMSSSQFSMTQQT). Residues 552-572 (ELFLSREIVLTVMGLVLSSFF) traverse the membrane as a helical segment. The Extracellular portion of the chain corresponds to 573–588 (KKLSHFDFKTINHLLN). A helical membrane pass occupies residues 589–609 (FYIFTICLVFFSSNDAVPTFI). Residues 610–630 (QERFIFIRETSHNAYRASSYV) are Cytoplasmic-facing. Residues 631 to 651 (ISSLIVYLPFFAIQGFTFAGI) form a helical membrane-spanning segment. Topologically, residues 652-661 (TQYILHLNSS) are extracellular. N-linked (GlcNAc...) asparagine glycosylation is present at Asn659. Residues 662–682 (ILSFWLILYSSLVTSNAYVML) traverse the membrane as a helical segment. At 683-690 (VSALVPSY) the chain is on the cytoplasmic side. A helical transmembrane segment spans residues 691 to 711 (ITGYAVVIATTALFFLTCGFF). Residues 712–798 (LKRTQIPLVW…LFSMDIREEN (87 aa)) are Extracellular-facing. 2 N-linked (GlcNAc...) asparagine glycosylation sites follow: Asn771 and Asn780. A helical membrane pass occupies residues 799–819 (IWLDIVILLAWGVLYRLFFYV). Over 820–830 (VLRFYSKNERK) the chain is Cytoplasmic.

This sequence belongs to the ABC transporter superfamily. ABCG family. Stunted arbuscule (STR) subfamily. Heterodimerizes with STR2; the resulting transporter is located in the peri-arbuscular membrane.

The protein localises to the cell membrane. Its function is as follows. Together with STR2, required for arbuscule development in arbuscular mycorrhizal (AM) symbiosis. The polypeptide is ABC transporter G family member STR (Petunia hybrida (Petunia)).